The chain runs to 145 residues: Ribosome maturation factor RimP (145 aa).

It belongs to the RimP family.

The protein resides in the cytoplasm. Its function is as follows. Required for maturation of 30S ribosomal subunits. The sequence is that of Ribosome maturation factor RimP from Borrelia garinii subsp. bavariensis (strain ATCC BAA-2496 / DSM 23469 / PBi) (Borreliella bavariensis).